The following is a 94-amino-acid chain: Large ribosomal subunit protein bL27 (94 aa).

The propeptide occupies Met-1–Phe-9.

The protein belongs to the bacterial ribosomal protein bL27 family. The N-terminus is cleaved by ribosomal processing cysteine protease Prp.

The chain is Large ribosomal subunit protein bL27 from Staphylococcus haemolyticus (strain JCSC1435).